The primary structure comprises 513 residues: ATP synthase subunit alpha (513 aa).

171 to 178 is an ATP binding site; sequence GDRQIGKT.

It belongs to the ATPase alpha/beta chains family. In terms of assembly, F-type ATPases have 2 components, CF(1) - the catalytic core - and CF(0) - the membrane proton channel. CF(1) has five subunits: alpha(3), beta(3), gamma(1), delta(1), epsilon(1). CF(0) has three main subunits: a(1), b(2) and c(9-12). The alpha and beta chains form an alternating ring which encloses part of the gamma chain. CF(1) is attached to CF(0) by a central stalk formed by the gamma and epsilon chains, while a peripheral stalk is formed by the delta and b chains.

It is found in the cell inner membrane. The enzyme catalyses ATP + H2O + 4 H(+)(in) = ADP + phosphate + 5 H(+)(out). Its function is as follows. Produces ATP from ADP in the presence of a proton gradient across the membrane. The alpha chain is a regulatory subunit. In Wolbachia sp. subsp. Drosophila simulans (strain wRi), this protein is ATP synthase subunit alpha.